Reading from the N-terminus, the 434-residue chain is L-2-hydroxyglutarate dehydrogenase, mitochondrial (434 aa).

Belongs to the L2HGDH family. FAD is required as a cofactor.

Its subcellular location is the mitochondrion. The enzyme catalyses (S)-2-hydroxyglutarate + A = 2-oxoglutarate + AH2. In Caenorhabditis briggsae, this protein is L-2-hydroxyglutarate dehydrogenase, mitochondrial.